The sequence spans 378 residues: Putative zinc finger protein C09F5.3 (378 aa).

Residues methionine 1–serine 14 are compositionally biased toward basic residues. Disordered regions lie at residues methionine 1–isoleucine 36 and threonine 61–proline 80. 2 stretches are compositionally biased toward basic and acidic residues: residues valine 16 to histidine 26 and leucine 62 to proline 71. The C2H2-type 1 zinc finger occupies leucine 42–histidine 65. The C2H2-type 2; degenerate zinc finger occupies valine 85–histidine 107. Residues tyrosine 204–serine 226 form a C2H2-type 3; degenerate zinc finger. Residues threonine 231–lysine 250 are disordered. Positions proline 235–lysine 246 are enriched in pro residues. 4 consecutive C2H2-type zinc fingers follow at residues leucine 254 to histidine 277, aspartate 284 to histidine 306, histidine 312 to histidine 334, and phenylalanine 355 to histidine 377.

The protein resides in the nucleus. The protein is Putative zinc finger protein C09F5.3 of Caenorhabditis elegans.